A 284-amino-acid polypeptide reads, in one-letter code: 4-diphosphocytidyl-2-C-methyl-D-erythritol kinase (284 aa).

Lysine 14 is an active-site residue. 98-108 (PMGGGLGGGSS) provides a ligand contact to ATP. Aspartate 140 is a catalytic residue.

It belongs to the GHMP kinase family. IspE subfamily.

It catalyses the reaction 4-CDP-2-C-methyl-D-erythritol + ATP = 4-CDP-2-C-methyl-D-erythritol 2-phosphate + ADP + H(+). The protein operates within isoprenoid biosynthesis; isopentenyl diphosphate biosynthesis via DXP pathway; isopentenyl diphosphate from 1-deoxy-D-xylulose 5-phosphate: step 3/6. In terms of biological role, catalyzes the phosphorylation of the position 2 hydroxy group of 4-diphosphocytidyl-2C-methyl-D-erythritol. The protein is 4-diphosphocytidyl-2-C-methyl-D-erythritol kinase of Shewanella baltica (strain OS195).